Here is a 181-residue protein sequence, read N- to C-terminus: HGPRTase-like protein 2 (181 aa).

It belongs to the purine/pyrimidine phosphoribosyltransferase family. Archaeal HPRT subfamily.

Its function is as follows. May catalyze a purine salvage reaction, the substrate is unknown. The protein is HGPRTase-like protein 2 of Haloterrigena turkmenica (strain ATCC 51198 / DSM 5511 / JCM 9101 / NCIMB 13204 / VKM B-1734 / 4k) (Halococcus turkmenicus).